The sequence spans 985 residues: Ephrin type-B receptor 1-A (985 aa).

The signal sequence occupies residues 1–19; sequence MELNVLLLLLCLSGGQVGA. At 20–542 the chain is on the extracellular side; the sequence is VEETLMDTRT…YKSELREQLP (523 aa). The region spanning 21 to 203 is the Eph LBD domain; the sequence is EETLMDTRTA…FFKEMPSVVQ (183 aa). Fibronectin type-III domains are found at residues 324–434 and 435–532; these read VPSG…TNQA and APSS…TAED. Residues asparagine 336, asparagine 428, and asparagine 482 are each glycosylated (N-linked (GlcNAc...) asparagine). A helical membrane pass occupies residues 543-563; that stretch reads LTGSAAAGVVFIVSLVAISIV. The Cytoplasmic portion of the chain corresponds to 564–985; it reads CSRKRTYSKE…QITQSPTSIA (422 aa). Residues 620–883 form the Protein kinase domain; that stretch reads VKIEEVIGAG…EIVNTLRPMI (264 aa). ATP contacts are provided by residues 626-634 and lysine 652; that span reads IGAGEFGEV. Aspartate 745 functions as the Proton acceptor in the catalytic mechanism. The SAM domain maps to 912-976; the sequence is SAFTSVDDWL…LNSIQSMRVQ (65 aa). The short motif at 983-985 is the PDZ-binding element; the sequence is SIA.

The protein belongs to the protein kinase superfamily. Tyr protein kinase family. Ephrin receptor subfamily. In terms of assembly, heterotetramer upon binding of the ligand. The heterotetramer is composed of an ephrin dimer and a receptor dimer. Oligomerization is probably required to induce biological responses. In terms of processing, phosphorylated. Autophosphorylation is stimulated by ligands.

It is found in the cell membrane. The protein resides in the early endosome membrane. The protein localises to the cell projection. Its subcellular location is the dendrite. It catalyses the reaction L-tyrosyl-[protein] + ATP = O-phospho-L-tyrosyl-[protein] + ADP + H(+). Receptor tyrosine kinase which binds promiscuously transmembrane ephrin-B family ligands residing on adjacent cells, leading to contact-dependent bidirectional signaling into neighboring cells. The signaling pathway downstream of the receptor is referred to as forward signaling while the signaling pathway downstream of the ephrin ligand is referred to as reverse signaling. May play a role in axon guidance during nervous system development. May also play an important redundant role with other ephrin-B receptors in development and maturation of dendritic spines and synapse formation. More generally, may play a role in targeted cell migration and adhesion. Upon activation by ephrin-B ligands activates the MAPK/ERK and the JNK signaling cascades to regulate cell migration and adhesion respectively. The sequence is that of Ephrin type-B receptor 1-A (ephb1-a) from Xenopus laevis (African clawed frog).